The primary structure comprises 116 residues: Putative pterin-4-alpha-carbinolamine dehydratase 1 (116 aa).

This sequence belongs to the pterin-4-alpha-carbinolamine dehydratase family.

It catalyses the reaction (4aS,6R)-4a-hydroxy-L-erythro-5,6,7,8-tetrahydrobiopterin = (6R)-L-erythro-6,7-dihydrobiopterin + H2O. The chain is Putative pterin-4-alpha-carbinolamine dehydratase 1 from Cupriavidus pinatubonensis (strain JMP 134 / LMG 1197) (Cupriavidus necator (strain JMP 134)).